The sequence spans 139 residues: I-Kappa-B like protein N1 (139 aa).

ANK repeat units lie at residues 16–48, 54–87, and 92–122; these read NGEN…QYLL, EGRK…DVNG, and TGDT…NINA.

It belongs to the polydnaviridae I-Kappa-B-like protein family.

In terms of biological role, suppresses the host immune response through NF-kappa-B inactivation. Possesses ankyrin repeat domain required for NF-kappa-B binding but lack the regulatory regions required for dissociation from NF-kappa-B and degradation. Therefore, prevents host NF-kappa-B release and subsequent activation. In Microplitis demolitor bracovirus (isolate Webb) (MdBV), this protein is I-Kappa-B like protein N1 (N2).